Consider the following 390-residue polypeptide: Magnesium-protoporphyrin IX monomethyl ester [oxidative] cyclase (390 aa).

The protein belongs to the AcsF family. Requires Fe cation as cofactor.

It carries out the reaction Mg-protoporphyrin IX 13-monomethyl ester + 3 NADPH + 3 O2 + 2 H(+) = 3,8-divinyl protochlorophyllide a + 3 NADP(+) + 5 H2O. Its pathway is porphyrin-containing compound metabolism; chlorophyll biosynthesis (light-independent). Catalyzes the formation of the isocyclic ring in chlorophyll biosynthesis. Mediates the cyclase reaction, which results in the formation of divinylprotochlorophyllide (Pchlide) characteristic of all chlorophylls from magnesium-protoporphyrin IX 13-monomethyl ester (MgPMME). This chain is Magnesium-protoporphyrin IX monomethyl ester [oxidative] cyclase, found in Prochlorococcus marinus (strain MIT 9215).